A 384-amino-acid chain; its full sequence is UPF0496 protein At3g28310/At3g28320 (384 aa).

Residues 184–215 (QESLFDRVTETKERIAKEIEEVQKRISNVNTA) are a coiled coil. 2 helical membrane-spanning segments follow: residues 217-237 (IVSH…CIAL) and 242-262 (VGAP…VQWV). Residues 264–361 (VNYVLNNSLE…TTKITEVCET (98 aa)) are a coiled coil.

It belongs to the UPF0496 family.

The protein localises to the membrane. In Arabidopsis thaliana (Mouse-ear cress), this protein is UPF0496 protein At3g28310/At3g28320.